Here is a 507-residue protein sequence, read N- to C-terminus: MQKVSGSGKKTTAFQQRKSDSVYNNNEMNKGTSSISYDPVYFVRDASSFTKTTHERAASVKLKLEHLYKVTVEQTVERNQRRMDFEAKLAQDRGSEERKKRQLNSLGQKESQFLRLRRTKLSLNDFHTVKVIGKGAFGEVRLVQKIDTGKIYAMKTLLKSEMFKKDQLAHVKAERDVLAESDSPWVVSLYYSFQDSQYLYLIMEFLPGGDLMTMLIKYDTFSEDVTRFYIAECILAIEAVHKLGFIHRDIKPDNILIDKTGHIKLSDFGLSMGFHKTHDNAYYQRLFESKINTSTSSTQNSLMVDTISLTMSSKDKIATWKKNRRIMAYSTVGTPDYIAPEIFTQHGYGQECDWWSLGAIMFECLIGWPPFCSENAHETYRKIINWRENLYFPEDLHLSAEAEDLIRKLLTSADQRLGRYGANDIKLHPFFRGVNWDTIREINAPFIPQLKSITDTSYFEEIDTIPNITMNSPPVLQNKIPSDVDQNLAFVGYTYKRFDMMTQKGIL.

Residues 1 to 30 (MQKVSGSGKKTTAFQQRKSDSVYNNNEMNK) are disordered. Residues 126–431 (FHTVKVIGKG…ANDIKLHPFF (306 aa)) enclose the Protein kinase domain. ATP is bound by residues 132–140 (IGKGAFGEV) and lysine 155. The Proton acceptor role is filled by aspartate 249. The AGC-kinase C-terminal domain occupies 432 to 505 (RGVNWDTIRE…KRFDMMTQKG (74 aa)).

This sequence belongs to the protein kinase superfamily. STE Ser/Thr protein kinase family. COT1 subfamily.

The enzyme catalyses L-seryl-[protein] + ATP = O-phospho-L-seryl-[protein] + ADP + H(+). It catalyses the reaction L-threonyl-[protein] + ATP = O-phospho-L-threonyl-[protein] + ADP + H(+). Functionally, protein kinase that seems to play a role in signaling pathways necessary for cell growth and mating. This chain is Serine/threonine-protein kinase CBK1 (CBK1), found in Pneumocystis carinii.